Reading from the N-terminus, the 500-residue chain is L-arabinose isomerase (500 aa).

The Mn(2+) site is built by Glu-306, Glu-333, His-350, and His-450.

The protein belongs to the arabinose isomerase family. Homohexamer. Mn(2+) serves as cofactor.

The enzyme catalyses beta-L-arabinopyranose = L-ribulose. The protein operates within carbohydrate degradation; L-arabinose degradation via L-ribulose; D-xylulose 5-phosphate from L-arabinose (bacterial route): step 1/3. In terms of biological role, catalyzes the conversion of L-arabinose to L-ribulose. The protein is L-arabinose isomerase of Salmonella newport (strain SL254).